We begin with the raw amino-acid sequence, 146 residues long: Hemoglobin subunit beta (146 aa).

Position 1 is an N-acetylvaline (V1). The Globin domain maps to 2–146 (HLTPEEKVAV…VANALAHKYH (145 aa)). T12 carries the post-translational modification Phosphothreonine. S44 carries the post-translational modification Phosphoserine. N6-acetyllysine is present on K59. H63 provides a ligand contact to heme b. At K82 the chain carries N6-acetyllysine. A heme b-binding site is contributed by H92. Residue C93 is modified to S-nitrosocysteine. N6-acetyllysine is present on K144.

This sequence belongs to the globin family. Heterotetramer of two alpha chains and two beta chains. Red blood cells.

Functionally, involved in oxygen transport from the lung to the various peripheral tissues. The polypeptide is Hemoglobin subunit beta (HBB) (Cercocebus atys (Sooty mangabey)).